The chain runs to 439 residues: Xylose isomerase (439 aa).

Residues histidine 98 and aspartate 101 contribute to the active site. Residues glutamate 229, glutamate 265, histidine 268, aspartate 293, aspartate 304, aspartate 306, and aspartate 335 each coordinate Mg(2+).

The protein belongs to the xylose isomerase family. In terms of assembly, homotetramer. Mg(2+) serves as cofactor.

The protein resides in the cytoplasm. The catalysed reaction is alpha-D-xylose = alpha-D-xylulofuranose. Functionally, involved in D-xylose catabolism. In Staphylococcus xylosus, this protein is Xylose isomerase (xylA).